Consider the following 487-residue polypeptide: Neuronal immunoglobulin domain-containing protein rig-3 (487 aa).

Residues 1-23 form the signal peptide; sequence MGRLLAKMLFPLAMCLFVSAVSA. Ig-like domains are found at residues 34-139 and 247-354; these read PIVI…KTIK and PEFE…PKVT. 2 cysteine pairs are disulfide-bonded: cysteine 61/cysteine 124 and cysteine 271/cysteine 327. Aspartate 466 is lipidated: GPI-anchor amidated aspartate. Positions 467 to 487 are cleaved as a propeptide — removed in mature form; that stretch reads SASDSKFPLALATLFFVCLFI.

As to expression, expressed in the cholinergic motor neurons AS, VA and DA in the ventral nerve cord and in the mechanosensory ALM neurons in the midbody.

The protein localises to the cell projection. It is found in the axon. It localises to the synapse. The protein resides in the cell membrane. Its function is as follows. Cell surface protein which plays a role in the plasticity of cholinergic synapses at neuromuscular junctions and in the polarity of the mechanosensory neuron ALM, possibly by antagonizing Wnt signaling. The sequence is that of Neuronal immunoglobulin domain-containing protein rig-3 from Caenorhabditis elegans.